Consider the following 192-residue polypeptide: uncharacterized protein (192 aa).

The signal sequence occupies residues 1–24 (MSGVLSCVLRACACAGLCCWVCMG). The interval 140–192 (RAGADEGAGGNAAGCPEDTRGFARSPGDLMGGMNGDLGDEGETGEGGDNGAGE) is disordered.

This is an uncharacterized protein from Human herpesvirus 6A (strain Uganda-1102) (HHV-6 variant A).